The sequence spans 575 residues: Thiol:disulfide interchange protein DsbD (575 aa).

The first 24 residues, 1-24 (MIKRTLMLFLLLCSPLLTPAAANA), serve as a signal peptide directing secretion. 2 cysteine pairs are disulfide-bonded: Cys-126–Cys-132 and Cys-192–Cys-314. 8 helical membrane-spanning segments follow: residues 180–200 (AILIGIGIAFTPCVLPMYPLI), 216–236 (IFWLALSYVQGMAVTYTLLGL), 253–273 (YVLIGLSVLFILLALSMFGLY), 297–317 (LFGVFAMGALAGLICSPCTTA), 336–356 (GLTLYLYALGMGLPLIAVTLF), 367–387 (WMQYVKEAFGFIILALPVFLL), 394–414 (AWGIRLWSLLAVSFLGWGFVL), and 425–445 (VIQLILLILMLIATRPLQDWF). The Thioredoxin domain occupies 444–575 (WFWGTTVTQQ…FNEHLQHLPK (132 aa)). A disulfide bond links Cys-490 and Cys-493.

This sequence belongs to the thioredoxin family. DsbD subfamily.

The protein resides in the cell inner membrane. It carries out the reaction [protein]-dithiol + NAD(+) = [protein]-disulfide + NADH + H(+). It catalyses the reaction [protein]-dithiol + NADP(+) = [protein]-disulfide + NADPH + H(+). In terms of biological role, required to facilitate the formation of correct disulfide bonds in some periplasmic proteins and for the assembly of the periplasmic c-type cytochromes. Acts by transferring electrons from cytoplasmic thioredoxin to the periplasm. This transfer involves a cascade of disulfide bond formation and reduction steps. In Photorhabdus laumondii subsp. laumondii (strain DSM 15139 / CIP 105565 / TT01) (Photorhabdus luminescens subsp. laumondii), this protein is Thiol:disulfide interchange protein DsbD.